Here is a 190-residue protein sequence, read N- to C-terminus: DNA dC-&gt;dU-editing enzyme APOBEC-3C (190 aa).

The CMP/dCMP-type deaminase domain occupies 29–138 (DRNETWLCFT…TDYQEGLRSL (110 aa)). Zn(2+) contacts are provided by His-66, Cys-97, and Cys-100.

Belongs to the cytidine and deoxycytidylate deaminase family. In terms of assembly, homodimer. Interacts with TRIB3. The cofactor is Zn(2+).

It localises to the nucleus. It is found in the cytoplasm. The enzyme catalyses a 2'-deoxycytidine in single-stranded DNA + H2O + H(+) = a 2'-deoxyuridine in single-stranded DNA + NH4(+). Its function is as follows. DNA deaminase (cytidine deaminase) which acts as an inhibitor of retrovirus replication and retrotransposon mobility via deaminase-dependent and -independent mechanisms. May also play a role in the epigenetic regulation of gene expression through the process of active DNA demethylation. In Gorilla gorilla gorilla (Western lowland gorilla), this protein is DNA dC-&gt;dU-editing enzyme APOBEC-3C (APOBEC3C).